Reading from the N-terminus, the 808-residue chain is PH domain-containing protein DDB_G0275795 (808 aa).

Residues 57–121 (ENLEILKEIK…RNRQASQQEL (65 aa)) adopt a coiled-coil conformation. The segment covering 108-120 (ESTTRNRQASQQE) has biased composition (polar residues). Disordered stretches follow at residues 108 to 127 (ESTT…PPIL), 228 to 325 (GANA…QDEE), 339 to 375 (EKLK…QLQS), 405 to 475 (QQQQ…NGSN), 523 to 542 (DQTK…ELKK), and 645 to 675 (KGGG…SNTD). Residues 124–216 (PPILSGYLKK…WTEGLKEFKK (93 aa)) enclose the PH domain. Low complexity predominate over residues 228 to 248 (GANANGNGNSSPNMSSSGSYS). Over residues 255-274 (ESSQQPLNSSTGAINTTPQR) the composition is skewed to polar residues. Positions 293–321 (SHSSSSTAPDSPTLSSSYVPPPSSSNLNP) are enriched in low complexity. The stretch at 322–412 (QDEELKRREN…QQQQQQQQQQ (91 aa)) forms a coiled coil. Residues 339–353 (EKLKQQDDQQQDDKQ) show a composition bias toward basic and acidic residues. Composition is skewed to low complexity over residues 354–375 (QQQQ…QLQS) and 405–414 (QQQQQQQQPP). Residues 417-428 (SPQNSRHGSTNY) show a composition bias toward polar residues. Positions 429–449 (SQLQQQQQQPQQQPQQQSSPQ) are enriched in low complexity. Positions 450–475 (VIISNNNSPRFESQQQQNNFHNNGSN) are enriched in polar residues. Residues 487-645 (DELNKKFLKE…DKYINELLEK (159 aa)) are a coiled coil. Residues 525–542 (TKTDAEEKQNKSSNELKK) show a composition bias toward basic and acidic residues. A compositionally biased stretch (low complexity) spans 654–673 (NSNNNNNSNNNNNNSNNNSN). The stretch at 678–734 (KESMVAHQTQNAFLLQEIQRLETQSQFKLDIKIQQIEELENQLEQQLYQFHRFREAI) forms a coiled coil.

This chain is PH domain-containing protein DDB_G0275795, found in Dictyostelium discoideum (Social amoeba).